Here is a 138-residue protein sequence, read N- to C-terminus: Small ribosomal subunit protein uS11c (138 aa).

The protein belongs to the universal ribosomal protein uS11 family. Part of the 30S ribosomal subunit.

The protein localises to the plastid. It is found in the chloroplast. The sequence is that of Small ribosomal subunit protein uS11c from Phaseolus vulgaris (Kidney bean).